A 156-amino-acid polypeptide reads, in one-letter code: Ribosomal RNA large subunit methyltransferase H (156 aa).

S-adenosyl-L-methionine-binding positions include leucine 73, glycine 104, and 123–128 (VSSLTL).

The protein belongs to the RNA methyltransferase RlmH family. In terms of assembly, homodimer.

Its subcellular location is the cytoplasm. The catalysed reaction is pseudouridine(1915) in 23S rRNA + S-adenosyl-L-methionine = N(3)-methylpseudouridine(1915) in 23S rRNA + S-adenosyl-L-homocysteine + H(+). In terms of biological role, specifically methylates the pseudouridine at position 1915 (m3Psi1915) in 23S rRNA. The sequence is that of Ribosomal RNA large subunit methyltransferase H from Burkholderia mallei (strain NCTC 10247).